A 716-amino-acid chain; its full sequence is UvrABC system protein C (716 aa).

The 81-residue stretch at 14 to 94 folds into the GIY-YIG domain; the sequence is AEPGCYLMKD…IKRHRPRFNI (81 aa). A UVR domain is found at 206 to 241; it reads TELVERLHGRMDEAADALRFEDAARLRDQLQAVERS.

Belongs to the UvrC family. As to quaternary structure, interacts with UvrB in an incision complex.

It is found in the cytoplasm. Functionally, the UvrABC repair system catalyzes the recognition and processing of DNA lesions. UvrC both incises the 5' and 3' sides of the lesion. The N-terminal half is responsible for the 3' incision and the C-terminal half is responsible for the 5' incision. The polypeptide is UvrABC system protein C (Anaeromyxobacter sp. (strain Fw109-5)).